The primary structure comprises 139 residues: Hydrogenase maturation factor HypA (139 aa).

Position 2 (His-2) interacts with Ni(2+). Residues Cys-73, Cys-76, Cys-110, and Cys-113 each contribute to the Zn(2+) site.

The protein belongs to the HypA/HybF family.

In terms of biological role, involved in the maturation of [NiFe] hydrogenases. Required for nickel insertion into the metal center of the hydrogenase. The polypeptide is Hydrogenase maturation factor HypA (Pyrococcus horikoshii (strain ATCC 700860 / DSM 12428 / JCM 9974 / NBRC 100139 / OT-3)).